A 65-amino-acid chain; its full sequence is Large ribosomal subunit protein bL32 (65 aa).

Over residues 1–19 (MAVQKSRKTPSKRGMRRSH) the composition is skewed to basic residues. Positions 1-32 (MAVQKSRKTPSKRGMRRSHNALVKSTLSEDQE) are disordered.

The protein belongs to the bacterial ribosomal protein bL32 family.

The protein is Large ribosomal subunit protein bL32 of Vesicomyosocius okutanii subsp. Calyptogena okutanii (strain HA).